The primary structure comprises 865 residues: Leucine--tRNA ligase (865 aa).

The short motif at 58–68 is the 'HIGH' region element; that stretch reads PYPSGNLHMGH. Residues 629–633 carry the 'KMSKS' region motif; sequence KMSKS. An ATP-binding site is contributed by K632.

It belongs to the class-I aminoacyl-tRNA synthetase family.

It localises to the cytoplasm. It carries out the reaction tRNA(Leu) + L-leucine + ATP = L-leucyl-tRNA(Leu) + AMP + diphosphate. The protein is Leucine--tRNA ligase of Synechococcus sp. (strain ATCC 27144 / PCC 6301 / SAUG 1402/1) (Anacystis nidulans).